A 118-amino-acid chain; its full sequence is Large ribosomal subunit protein uL18 (118 aa).

This sequence belongs to the universal ribosomal protein uL18 family. Part of the 50S ribosomal subunit; part of the 5S rRNA/L5/L18/L25 subcomplex. Contacts the 5S and 23S rRNAs.

Functionally, this is one of the proteins that bind and probably mediate the attachment of the 5S RNA into the large ribosomal subunit, where it forms part of the central protuberance. This is Large ribosomal subunit protein uL18 from Parvibaculum lavamentivorans (strain DS-1 / DSM 13023 / NCIMB 13966).